Reading from the N-terminus, the 490-residue chain is Cobyric acid synthase (490 aa).

Residues 252–439 form the GATase cobBQ-type domain; sequence RLKVVVPVLP…LHGLFESTAA (188 aa). Catalysis depends on Cys333, which acts as the Nucleophile. His431 is a catalytic residue.

It belongs to the CobB/CobQ family. CobQ subfamily.

Its pathway is cofactor biosynthesis; adenosylcobalamin biosynthesis. Functionally, catalyzes amidations at positions B, D, E, and G on adenosylcobyrinic A,C-diamide. NH(2) groups are provided by glutamine, and one molecule of ATP is hydrogenolyzed for each amidation. In Pseudomonas aeruginosa (strain UCBPP-PA14), this protein is Cobyric acid synthase.